The chain runs to 304 residues: Probable intron-encoded endonuclease 1 (304 aa).

In terms of domain architecture, GIY-YIG spans 84 to 175 (DKGGIYSFIN…RFNFDNLYNF (92 aa)).

This sequence to endonucleases of group I introns of fungi and phage.

Its subcellular location is the mitochondrion. Its function is as follows. Mitochondrial DNA endonuclease involved in intron homing. This chain is Probable intron-encoded endonuclease 1, found in Neurospora crassa (strain ATCC 24698 / 74-OR23-1A / CBS 708.71 / DSM 1257 / FGSC 987).